A 41-amino-acid polypeptide reads, in one-letter code: MKVRNSLKSLRARHRDNRLVRRKGRLYVINKVQRRFKARQG.

It belongs to the bacterial ribosomal protein bL36 family.

The sequence is that of Large ribosomal subunit protein bL36 from Rhodopseudomonas palustris (strain HaA2).